A 252-amino-acid chain; its full sequence is Major prion protein (252 aa).

The N-terminal stretch at 1–22 (MANLGYWMLVLFVATWSDLGLC) is a signal peptide. The segment at 23–229 (KKRPKPGGWN…ESQAYYQRGS (207 aa)) is interaction with GRB2, ERI3 and SYN1. The segment at 26 to 104 (PKPGGWNTGG…HNQWNKPSKP (79 aa)) is disordered. 5 tandem repeats follow at residues 51–58 (PQGGGWGQ), 59–66 (PHGGGWGQ), 67–74 (PHGGGWGQ), 75–82 (PHGGGWGQ), and 83–90 (PHGGGWGQ). Residues 51-90 (PQGGGWGQPHGGGWGQPHGGGWGQPHGGGWGQPHGGGWGQ) are 5 X 8 AA tandem repeats of P-H-G-G-G-W-G-Q. Gly residues predominate over residues 52–92 (QGGGWGQPHGGGWGQPHGGGWGQPHGGGWGQPHGGGWGQAG). Cu(2+)-binding residues include histidine 60, glycine 61, glycine 62, histidine 68, glycine 69, glycine 70, histidine 76, glycine 77, glycine 78, histidine 84, glycine 85, and glycine 86. A disulfide bridge links cysteine 178 with cysteine 213. N-linked (GlcNAc...) asparagine glycans are attached at residues asparagine 180 and asparagine 196. Serine 229 is lipidated: GPI-anchor amidated serine. Positions 230 to 252 (SMVLFSSPPVILLISFLIFLIVG) are cleaved as a propeptide — removed in mature form.

It belongs to the prion family. Monomer and homodimer. Has a tendency to aggregate into amyloid fibrils containing a cross-beta spine, formed by a steric zipper of superposed beta-strands. Soluble oligomers may represent an intermediate stage on the path to fibril formation. Copper binding may promote oligomerization. Interacts with GRB2, APP, ERI3/PRNPIP and SYN1. Mislocalized cytosolically exposed PrP interacts with MGRN1; this interaction alters MGRN1 subcellular location and causes lysosomal enlargement. Interacts with KIAA1191.

It localises to the cell membrane. It is found in the golgi apparatus. Functionally, its primary physiological function is unclear. Has cytoprotective activity against internal or environmental stresses. May play a role in neuronal development and synaptic plasticity. May be required for neuronal myelin sheath maintenance. May play a role in iron uptake and iron homeostasis. Soluble oligomers are toxic to cultured neuroblastoma cells and induce apoptosis (in vitro). Association with GPC1 (via its heparan sulfate chains) targets PRNP to lipid rafts. Also provides Cu(2+) or Zn(2+) for the ascorbate-mediated GPC1 deaminase degradation of its heparan sulfate side chains. The polypeptide is Major prion protein (PRNP) (Ateles paniscus (Black spider monkey)).